The following is a 351-amino-acid chain: L-threonine 3-dehydrogenase (351 aa).

A Zn(2+)-binding site is contributed by C39. Residues T41 and H44 each act as charge relay system in the active site. The Zn(2+) site is built by H64, E65, C94, C97, C100, and C108. Residues I176, D196, R201, 271–273 (LGI), and 295–296 (IY) contribute to the NAD(+) site.

The protein belongs to the zinc-containing alcohol dehydrogenase family. As to quaternary structure, homotetramer. The cofactor is Zn(2+).

It is found in the cytoplasm. The catalysed reaction is L-threonine + NAD(+) = (2S)-2-amino-3-oxobutanoate + NADH + H(+). It participates in amino-acid degradation; L-threonine degradation via oxydo-reductase pathway; glycine from L-threonine: step 1/2. Catalyzes the NAD(+)-dependent oxidation of L-threonine to 2-amino-3-ketobutyrate. The sequence is that of L-threonine 3-dehydrogenase from Francisella tularensis subsp. novicida (strain U112).